Reading from the N-terminus, the 114-residue chain is Large ribosomal subunit protein bL19 (114 aa).

The protein belongs to the bacterial ribosomal protein bL19 family.

This protein is located at the 30S-50S ribosomal subunit interface and may play a role in the structure and function of the aminoacyl-tRNA binding site. This chain is Large ribosomal subunit protein bL19, found in Bacillus mycoides (strain KBAB4) (Bacillus weihenstephanensis).